Consider the following 504-residue polypeptide: MNQYVIAIDQGTTSTRAIIFDHSGAIVSSGQMEHEQIFPKAGWVEHDAAEIWNNTREVIASALSKANLTRHDIAAVGITNQRETAVVWDKTTGEPVYNAIVWQDTRTQDIVDELSKDGGGDRFKQKVGLPLATYFSGTKIKWILDNVDGAREKAEAGNLVFGNTDCWVLWNLTGGVDGGVHVTDVTNASRTLFMDLETLQWDEEILGIFGVPRSMMPEIKSSSEVYGTVHTSQLLRETPVAGILGDQQAATFGQAAFETGEAKNTYGTGCFLIFNTGEEIVHSKNGLLTTVGYKLGDAKPHYALEGSIAVTGSLIQWLRDNLGMISSAPEVETLAASVKDNGGVYIVPAFSGLFAPYWRPDARGAIVGLTRFVNKNHIARAALESTAFQTREVLDAVNADSGVPLTELKVDGGMVANDALMQFQADILGVPVIRPKVIETTALGAAYAAGLAVGFWKDLGELSSNWSEDKRWEPQLDQAEQERQMRLWRKAVTKSMDWVDEDVK.

Position 12 (Thr-12) interacts with ADP. ATP is bound by residues Thr-12, Thr-13, and Ser-14. Residue Thr-12 participates in sn-glycerol 3-phosphate binding. ADP is bound at residue Arg-16. Positions 82, 83, 134, and 246 each coordinate sn-glycerol 3-phosphate. The glycerol site is built by Arg-82, Glu-83, Tyr-134, Asp-246, and Gln-247. ADP is bound by residues Thr-268 and Gly-312. The ATP site is built by Thr-268, Gly-312, Gln-316, and Gly-413. ADP-binding residues include Gly-413 and Asn-417.

The protein belongs to the FGGY kinase family.

The enzyme catalyses glycerol + ATP = sn-glycerol 3-phosphate + ADP + H(+). Its pathway is polyol metabolism; glycerol degradation via glycerol kinase pathway; sn-glycerol 3-phosphate from glycerol: step 1/1. Inhibited by fructose 1,6-bisphosphate (FBP). Its function is as follows. Key enzyme in the regulation of glycerol uptake and metabolism. Catalyzes the phosphorylation of glycerol to yield sn-glycerol 3-phosphate. The polypeptide is Glycerol kinase (Pseudarthrobacter chlorophenolicus (strain ATCC 700700 / DSM 12829 / CIP 107037 / JCM 12360 / KCTC 9906 / NCIMB 13794 / A6) (Arthrobacter chlorophenolicus)).